The chain runs to 964 residues: Iron-responsive element-binding protein 2 (964 aa).

The [4Fe-4S] cluster site is built by Cys-513, Cys-579, and Cys-582.

The protein belongs to the aconitase/IPM isomerase family. In terms of assembly, interacts with RBCK1 only in iron-rich conditions. Interacts (when associated with the 4Fe-4S) with FBXL5. Interacts with CIAO1 and CIAO2A. Requires [4Fe-4S] cluster as cofactor. Ubiquitinated and degraded by the proteasome in presence of high level of iron and oxygen. Ubiquitinated by a SCF complex containing FBXL5. Upon iron and oxygen depletion FBXL5 is degraded, preventing ubiquitination and allowing its RNA-binding activity.

The protein localises to the cytoplasm. RNA-binding protein that binds to iron-responsive elements (IRES), which are stem-loop structures found in the 5'-UTR of ferritin, and delta aminolevulinic acid synthase mRNAs, and in the 3'-UTR of transferrin receptor mRNA. Binding to the IRE element in ferritin results in the repression of its mRNA translation. Binding of the protein to the transferrin receptor mRNA inhibits the degradation of this otherwise rapidly degraded mRNA. The sequence is that of Iron-responsive element-binding protein 2 (IREB2) from Sus scrofa (Pig).